Reading from the N-terminus, the 150-residue chain is Large ribosomal subunit protein bL9 (150 aa).

The protein belongs to the bacterial ribosomal protein bL9 family.

Functionally, binds to the 23S rRNA. The chain is Large ribosomal subunit protein bL9 from Buchnera aphidicola subsp. Acyrthosiphon pisum (strain 5A).